Consider the following 20-residue polypeptide: Cathepsin L-like cysteine proteinase (20 aa).

This sequence belongs to the peptidase C1 family.

The protein localises to the lysosome. Thiol protease. The chain is Cathepsin L-like cysteine proteinase from Fasciola hepatica (Liver fluke).